We begin with the raw amino-acid sequence, 1285 residues long: MFSPLTKRAKQSSRNEKTPRNRVPPPDSPVTPATQNRNNFISDRPATGTPAPWAPRLSVLARVSPGNNGDKGVDSDQLKPVFVGEFPQLLRDEQSYPGDACVSGGMDKETCLSWFITGSKVFVWSHLTTLPSRKCVVLELPVVVLVNEESGSGLQDGKSWLVNVVSWDTSAGAATRASRSRSPVGVVMCNRKTRAVVYWSDIFSGQEAAPAEKARHLIKRQSNGIRSSRAENSDLNSLITTAVAAAERLCIAIACSSNGELWQFTCSPTGVKSNQVQLNISSSSVSEGYPRSLIWRFSQGLARESCWEFLMLTDCDIHCFTIEPYPDLTVSEVWQHEIVGTDGDSGIKKDIASQKQIWPLDLQVDDQGKVITVLVATICMDRASSSSYTQYSLLTLQHKSEMRFADGREEKVLEKQGPIQVIIPKARVEDKDFLFSMRLRVGGRPPGSAIILSGDGTATVCYCHGSSTRLYKFDLPYDAGKVLDASVLSSTDEHEYGAWTVLTEKAGVWAIPEKAVVLGGVEPPERSLSRKNSSNERSTRDETRVTPYGVDRTAGRENSDIQNIEDKGNPKMGFTRQTARDEESEALLGQLFEGFLLSGKVDGSLEKLSQSGAFDRDGEANVFARKSKSIVDTLAKHWTTTRGAEIVAMTVISSQLVEKQQKHENFLHFLALSKCHEELCSKQRHSLQIILENGEKLAAMIQLRELQNMINQNRSARFGSPQAGSEDQVSCALWDLIQFVGERARRNTVLLMDRDNAEVFYSKVSELEEVFYCLNRQLEYIIRADQPLGTQLQRACELSNACVTILQTALDYKNEHQMWYPPLEGLIPWHSQTVVCNGLWCIASFMLHLLTEASRIDISAKSDIYTHLEVLTEVLLEACAGSTFAKLEREEENKGLLNEYWTRRDTIFDSLYRQAKEFMEAEIQGIRERTEATDEDIFRNRCSNLISIAKRHAGYKIMWKICYDLNDTGLLRNLMHEGVGPQGGFSYFVFQQLYDMKQFSKLLRLGEEFQDELLIFLKRHSDLVWLHQVFLHQFSSASDTLHTLALSQDEESMTTVEERTGPEPEDVQPTFADRKRFLNLSKIAYVADKDADSESKVKRIEADLNLLKLQEEITKALPNGEARNRLFRPEELIETCLNIQGRWTAIKAFEVFAWTSSSFRENHRSLLEECWRNAADQDDWDRHHQASTNEGWSEEETLQNLRNTALFQASKRCYGPTRVNTFDGDFAQVLPLRRENPEDSTSSVEDVLMSHKDFAEAGKLMLTAIMLGCVEEEGIVAEEFSSPME.

2 disordered regions span residues 1–53 and 522–580; these read MFSP…PAPW and EPPE…QTAR. The segment covering 31 to 41 has biased composition (polar residues); the sequence is TPATQNRNNFI. Basic and acidic residues-rich tracts occupy residues 523–544 and 553–569; these read PPERSLSRKNSSNERSTRDETR and TAGRENSDIQNIEDKGN.

Belongs to the nucleoporin Nup133 family. Part of the nuclear pore complex (NPC). The NPC has an eight-fold symmetrical structure comprising a central transport channel and two rings, the cytoplasmic and nuclear rings, to which eight filaments are attached. The cytoplasmic filaments have loose ends, while the nuclear filaments are joined in a distal ring, forming a nuclear basket. NPCs are highly dynamic in configuration and composition, and can be devided in 3 subcomplexes, the NUP62 subcomplex, the NUP107-160 subcomplex and the NUP93 subcomplex, containing approximately 30 different nucleoporin proteins.

Its subcellular location is the nucleus envelope. The protein resides in the nucleus. It is found in the nuclear pore complex. This chain is Nuclear pore complex protein NUP133, found in Arabidopsis thaliana (Mouse-ear cress).